The chain runs to 464 residues: MSTDKTNQSWGGRFSEPVDAFVARFTASVTFDQRLYRHDIMGSIAHATMLAKVGVLTDAERDSIIDGLNTIRGEIEAGTFDWRVDLEDVHMNIEARLTDRIGVTGKKLHTGRSRNDQVATDIRLWLRDEIDLILGEITRLQKGLLEQAERESDTIMPGFTHLQTAQPVTFGHHLLAWFEMLSRDYERLVDCRKRANRMPLGSAALAGTTYPIDREYTAQLLGFDAVGGNSLDGVSDRDFAIEFCAAASIAMMHLSRFSEELVLWTSAQFQFIDLPDRFCTGSSIMPQKKNPDVPELVRGKSGRVFGALMGLLTLMKGQPLAYNKDNQEDKEPLFDAADTLRDSLRAFADMIPAIKPKHAIMREAALRGFSTATDLADYLVRRGLPFRDCHEIVGHAVKYGVDTGKDLAEMSLEELRQFSDQIEQDVFAVLTLEGSVNARNHVGGTAPAQVKAAVVRGLTLLASR.

It belongs to the lyase 1 family. Argininosuccinate lyase subfamily.

It is found in the cytoplasm. The enzyme catalyses 2-(N(omega)-L-arginino)succinate = fumarate + L-arginine. Its pathway is amino-acid biosynthesis; L-arginine biosynthesis; L-arginine from L-ornithine and carbamoyl phosphate: step 3/3. This is Argininosuccinate lyase from Pseudomonas fluorescens (strain SBW25).